The sequence spans 353 residues: Photosystem II D2 protein (353 aa).

Threonine 2 bears the N-acetylthreonine mark. Position 2 is a phosphothreonine (threonine 2). Residues cysteine 41–threonine 61 form a helical membrane-spanning segment. Histidine 118 contacts chlorophyll a. The chain crosses the membrane as a helical span at residues glycine 125–proline 141. Residues glutamine 130 and asparagine 143 each coordinate pheophytin a. Residues valine 153–serine 166 form a helical membrane-spanning segment. Residue histidine 198 participates in chlorophyll a binding. A helical membrane pass occupies residues alanine 208–aspartate 228. Residues histidine 215 and phenylalanine 262 each contribute to the a plastoquinone site. Histidine 215 provides a ligand contact to Fe cation. Histidine 269 is a binding site for Fe cation. The helical transmembrane segment at glycine 279–arginine 295 threads the bilayer.

Belongs to the reaction center PufL/M/PsbA/D family. PSII is composed of 1 copy each of membrane proteins PsbA, PsbB, PsbC, PsbD, PsbE, PsbF, PsbH, PsbI, PsbJ, PsbK, PsbL, PsbM, PsbT, PsbX, PsbY, PsbZ, Psb30/Ycf12, at least 3 peripheral proteins of the oxygen-evolving complex and a large number of cofactors. It forms dimeric complexes. The cofactor is The D1/D2 heterodimer binds P680, chlorophylls that are the primary electron donor of PSII, and subsequent electron acceptors. It shares a non-heme iron and each subunit binds pheophytin, quinone, additional chlorophylls, carotenoids and lipids. There is also a Cl(-1) ion associated with D1 and D2, which is required for oxygen evolution. The PSII complex binds additional chlorophylls, carotenoids and specific lipids..

The protein localises to the plastid. Its subcellular location is the chloroplast thylakoid membrane. The enzyme catalyses 2 a plastoquinone + 4 hnu + 2 H2O = 2 a plastoquinol + O2. In terms of biological role, photosystem II (PSII) is a light-driven water:plastoquinone oxidoreductase that uses light energy to abstract electrons from H(2)O, generating O(2) and a proton gradient subsequently used for ATP formation. It consists of a core antenna complex that captures photons, and an electron transfer chain that converts photonic excitation into a charge separation. The D1/D2 (PsbA/PsbD) reaction center heterodimer binds P680, the primary electron donor of PSII as well as several subsequent electron acceptors. D2 is needed for assembly of a stable PSII complex. The polypeptide is Photosystem II D2 protein (Liriodendron tulipifera (Tuliptree)).